We begin with the raw amino-acid sequence, 419 residues long: Squamosa promoter-binding-like protein 2 (419 aa).

Positions Ser-77–Glu-96 are disordered. An SBP-type zinc finger spans residues Thr-166–Pro-243. Zn(2+) contacts are provided by Cys-169, Cys-174, Cys-191, His-194, Cys-210, Cys-213, His-217, and Cys-229. Positions Lys-226–Lys-242 match the Bipartite nuclear localization signal motif. Residues Arg-230 to Tyr-249 are disordered.

It depends on Zn(2+) as a cofactor.

The protein localises to the nucleus. In terms of biological role, trans-acting factor that binds specifically to the consensus nucleotide sequence 5'-TNCGTACAA-3'. The polypeptide is Squamosa promoter-binding-like protein 2 (SPL2) (Arabidopsis thaliana (Mouse-ear cress)).